We begin with the raw amino-acid sequence, 51 residues long: Large ribosomal subunit protein bL33 (51 aa).

A disordered region spans residues 1 to 24 (MREKIRLNSSAGTGHFYTTDKNKR).

It belongs to the bacterial ribosomal protein bL33 family.

In Cellvibrio japonicus (strain Ueda107) (Pseudomonas fluorescens subsp. cellulosa), this protein is Large ribosomal subunit protein bL33.